The chain runs to 519 residues: F-box only protein 31-A (519 aa).

A disordered region spans residues 11 to 37 (GQSGGCRRRQQRKGAGNDPELEDEEEE). The region spanning 54–100 (PHSLLLLPPEILVEIFSLLPGTELGGLAQVCSKFRQILTTDTIWKRR) is the F-box domain. Zn(2+)-binding residues include cysteine 196, histidine 204, cysteine 220, and histidine 226. Positions 369-390 (REQRQTDNEEDDGRGAGPDKAE) are enriched in basic and acidic residues. The segment at 369–424 (REQRQTDNEEDDGRGAGPDKAEPAQQPAPLLRPPNEDANGADDDGDGGEQKPPNVQ) is disordered.

This sequence belongs to the FBXO31 family. In terms of assembly, part of a SCF (SKP1-cullin-F-box) protein ligase complex SCF(FBXO31).

Its subcellular location is the cytoplasm. It functions in the pathway protein modification; protein ubiquitination. Its function is as follows. Substrate-recognition component of the SCF(FBXO31) protein ligase complex, which specifically mediates the ubiquitination of proteins amidated at their C-terminus in response to oxidative stress, leading to their degradation by the proteasome. Fbxo31 specifically recognizes and binds C-terminal peptides bearing an amide: C-terminal amidation in response to oxidative stress takes place following protein fragmentation. The SCF(FBXO31) also plays a role in G1 arrest following DNA damage by mediating ubiquitination of phosphorylated cyclin-D1 (ccnd1), promoting its degradation by the proteasome, resulting in G1 arrest. The SCF(FBXO31) complex is however not a major regulator of ccnd1 stability during the G1/S transition. The sequence is that of F-box only protein 31-A (fbxo31-a) from Xenopus laevis (African clawed frog).